We begin with the raw amino-acid sequence, 122 residues long: MIINESYLNVADNSGAKLLRVIRVMGGSRRKWGTVGDVVVCSVRDAVPNGDLKKGDVVKAVIVRTKKEIRRPDGTYIRFDDNAAVVLDKYNEPKGTRVFGPVAKELREKGFMKIVSLAPEVF.

Belongs to the universal ribosomal protein uL14 family. As to quaternary structure, part of the 50S ribosomal subunit. Forms a cluster with proteins L3 and L19. In the 70S ribosome, L14 and L19 interact and together make contacts with the 16S rRNA in bridges B5 and B8.

Functionally, binds to 23S rRNA. Forms part of two intersubunit bridges in the 70S ribosome. The polypeptide is Large ribosomal subunit protein uL14 (Thermosipho africanus (strain TCF52B)).